The following is a 117-amino-acid chain: Galanin-like peptide (117 aa).

An N-terminal signal peptide occupies residues 1 to 23 (MACSVHLVLFLTILLSLAETPES). The propeptide occupies 86–117 (TMGETFVKANTGDMHILDKNVPKEEATLDSES).

This sequence belongs to the galanin family. As to expression, isoform 2 is found in brain, thymus and skin. Isoform 2 is found in the skin, in pericytes covering microvascular arterioles and venules on their abluminal surfaces. In larger vessels, isoform 2 is expressed in layers of smooth muscle cells. Isoform 2 is not detected in endothelial cells.

It localises to the secreted. Hypothalamic neuropeptide which binds to the G-protein-coupled galanin receptors (GALR1, GALR2 and GALR3). Involved in a large number of putative physiological functions in CNS homeostatic processes, including the regulation of gonadotropin-releasing hormone secretion. In terms of biological role, exhibits antimicrobial activity against Gram-negative bacterias, inducing bacterial membrane blebbing. Exhibits potent and dose-dependent vasoconstrictor and anti-edema activity in the cutaneous microvasculature, a physiologic effects which does not appear to be mediated via GALR1 or GALR2. The polypeptide is Galanin-like peptide (Galp) (Mus musculus (Mouse)).